The following is a 221-amino-acid chain: Ribonuclease 3 (221 aa).

Residues 4–121 (LEQLEKKLGY…LWAAVYIDSG (118 aa)) enclose the RNase III domain. Position 40 (E40) interacts with Mg(2+). Residue D44 is part of the active site. Mg(2+)-binding residues include D107 and E110. E110 is a catalytic residue. The DRBM domain occupies 151-219 (DYKTILQEIT…AEELIKLLEE (69 aa)).

It belongs to the ribonuclease III family. In terms of assembly, homodimer. Mg(2+) serves as cofactor.

The protein localises to the cytoplasm. It carries out the reaction Endonucleolytic cleavage to 5'-phosphomonoester.. Digests double-stranded RNA. Involved in the processing of primary rRNA transcript to yield the immediate precursors to the large and small rRNAs (23S and 16S). Also processes some mRNAs, and tRNAs when they are encoded in the rRNA operon. Probably processes pre-crRNA and tracrRNA of type II CRISPR loci if present in the organism. This chain is Ribonuclease 3 (rnc), found in Aquifex aeolicus (strain VF5).